The primary structure comprises 581 residues: MTDSPSLESNNKSDMDTPRPPASSHDEHDAAESVSEKQDSATTSPTGKLEPEYLTGLRLGLVMFTIFVSTILVSLEIGIIATAIPGITNDFRKLDDVGWYGSATFILAAAASPLWGKLYKYLNVKWVYLSAVGIFLVGSIVAAAAPNSVAVIVGRALQGWGASGVLGGTLIVINYVAPPRNHPLLIGTWMAVFMMSTILGPVIGGAFTSGVSWRWCFWINLPVGGPIVVLLLLFLRVPKHVKPVPATWKEIILNLDIPGFCLLLVSLVCLTLALQWGGQTKTWDDGSVIATLVLWILLTIGFFIVEWLQGARAMAPLSILKQRMTWSNVIFCLVSYAALYQVMFYLPIYFQSIHGQSAVTSGVNTLPFLAFFALGAMVSGGAIGKTRYTQPYELAGALIMTAGMALIYILDVDSPKAKYIGAEVLFGFGIGLCNQVPMTAVQGFSKPDEVASATGIMVMCQTLSGAYFVAIAQSLFANRMLHALNSGSDHLDVALVLGTGASELQDVFSGDDLTAVIDAYMVGIKDVFAFSLACAAFSVILTALIPFKRLPDHEKKPSKDAMASDEVKASEEVQQEKKVTV.

Positions 1-10 (MTDSPSLESN) are enriched in polar residues. Residues 1-47 (MTDSPSLESNNKSDMDTPRPPASSHDEHDAAESVSEKQDSATTSPTG) form a disordered region. Asn-11 is a glycosylation site (N-linked (GlcNAc...) asparagine). The span at 24–39 (SHDEHDAAESVSEKQD) shows a compositional bias: basic and acidic residues. Helical transmembrane passes span 61-81 (LVMF…GIIA), 96-116 (DVGW…PLWG), 126-146 (WVYL…AAAP), 159-179 (GWGA…VAPP), 184-204 (LLIG…PVIG), 215-235 (WCFW…LLFL), 251-271 (IILN…VCLT), 288-308 (VIAT…VEWL), 330-350 (IFCL…PIYF), 363-383 (VNTL…GGAI), 392-412 (YELA…ILDV), 424-444 (VLFG…VQGF), 456-476 (IMVM…QSLF), and 527-547 (VFAF…LIPF). The disordered stretch occupies residues 552–581 (DHEKKPSKDAMASDEVKASEEVQQEKKVTV). Basic and acidic residues predominate over residues 565–581 (DEVKASEEVQQEKKVTV).

Belongs to the major facilitator superfamily. TCR/Tet family.

It localises to the cell membrane. In terms of biological role, efflux pump that is probably involved in the export of dehydrocurvularin. In Alternaria cinerariae, this protein is Dehydrocurvularin exporter.